A 324-amino-acid chain; its full sequence is mRNA decay activator protein ZFP36 (324 aa).

The segment at 1–15 is necessary for nuclear export; it reads MDLAAIYKSLLSLSP. Residues 1–98 are necessary and sufficient for the association with mRNA decay enzymes and mRNA decay activation; the sequence is MDLAAIYKSL…PTSPTATPTT (98 aa). Necessary for localization of ARE-containing mRNAs to processing bodies (PBs) stretches follow at residues 1–172 and 98–324; these read MDLA…DLAA and TSSR…SVSE. The span at 15–46 shows a compositional bias: low complexity; it reads PELPSDLGETESSTSWASSGPWSLSSSDSSLP. Residues 15–50 form a disordered region; it reads PELPSDLGETESSTSWASSGPWSLSSSDSSLPEVAA. Ser58 bears the Phosphoserine; by MAPKAPK2 mark. Ser64 carries the post-translational modification Phosphoserine. The stretch at 69–73 is one P-P-P-P-G repeat; that stretch reads PPPPG. The segment at 76–100 is disordered; it reads PLAPRPSSDWSPSPTSPTATPTTSS. Phosphoserine is present on residues Ser86 and Ser88. Thr90 is modified (phosphothreonine). Ser91 carries the post-translational modification Phosphoserine. Residues 93–166 form a necessary for nuclear localization region; sequence TATPTTSSRY…GSRCHFIHNP (74 aa). The segment at 95–171 is necessary for RNA-binding; the sequence is TPTTSSRYKT…FIHNPSEDLA (77 aa). C3H1-type zinc fingers lie at residues 101–129 and 139–167; these read RYKT…HGLG and KYKT…HNPS. A necessary for interaction with PABPN1 region spans residues 101-192; the sequence is RYKTELCRTF…ISFSGLPSGR (92 aa). At Ser167 the chain carries Phosphoserine. Residues 172-324 form a necessary for mRNA decay activation region; sequence APGHPHVLRQ…PIFNRISVSE (153 aa). Phosphoserine; by MAPKAPK2 is present on Ser184. 2 disordered regions span residues 185-227 and 270-324; these read FSGL…LLLS and PSAH…SVSE. Position 195 is a phosphoserine (Ser195). A P-P-P-P-G repeat occupies 196–200; it reads PPPAS. Low complexity predominate over residues 204–214; the sequence is PSVSSWSFSPS. Ser216 is subject to Phosphoserine. One copy of the P-P-P-P-G repeat lies at 218–222; the sequence is PPPPG. Ser227 carries the phosphoserine; by MAPK1; in vitro modification. 3 positions are modified to phosphoserine: Ser274, Ser294, and Ser321. The tract at residues 310 to 324 is interaction with CNOT1; the sequence is APRRLPIFNRISVSE.

As to quaternary structure, associates with cytoplasmic CCR4-NOT and PAN2-PAN3 deadenylase complexes to trigger ARE-containing mRNA deadenylation and decay processes. Part of a mRNA decay activation complex at least composed of poly(A)-specific exoribonucleases CNOT6, EXOSC2 and XRN1 and mRNA-decapping enzymes DCP1A and DCP2. Associates with the RNA exosome complex. Interacts (via phosphorylated form) with 14-3-3 proteins; these interactions promote exclusion of ZFP36 from cytoplasmic stress granules in response to arsenite treatment in a MAPKAPK2-dependent manner and does not prevent CCR4-NOT deadenylase complex recruitment or ZFP36-induced ARE-containing mRNA deadenylation and decay processes. Interacts with 14-3-3 proteins; these interactions occur in response to rapamycin in an Akt-dependent manner. Interacts with AGO2 and AGO4. Interacts (via C-terminus) with CNOT1; this interaction occurs in a RNA-independent manner and induces mRNA deadenylation. Interacts (via N-terminus) with CNOT6. Interacts with CNOT6L. Interacts (via C-terminus) with CNOT7; this interaction occurs in a RNA-independent manner, induces mRNA deadenylation and is inhibited in a phosphorylation MAPKAPK2-dependent manner. Interacts (via unphosphorylated form) with CNOT8; this interaction occurs in a RNA-independent manner and is inhibited in a phosphorylation MAPKAPK2-dependent manner. Interacts with DCP1A. Interacts (via N-terminus) with DCP2. Interacts with EDC3. Interacts (via N-terminus) with EXOSC2. Interacts with heat shock 70 kDa proteins. Interacts with KHSRP; this interaction increases upon cytokine-induced treatment. Interacts with MAP3K4; this interaction enhances the association with SH3KBP1/CIN85. Interacts with MAPKAPK2; this interaction occurs upon skeletal muscle satellite cell activation. Interacts with NCL. Interacts with NUP214; this interaction increases upon lipopolysaccharide (LPS) stimulation. Interacts with PABPC1; this interaction occurs in a RNA-dependent manner. Interacts (via hypophosphorylated form) with PABPN1 (via RRM domain and C-terminal arginine-rich region); this interaction occurs in the nucleus in a RNA-independent manner, decreases in presence of single-stranded poly(A) RNA-oligomer and in a p38 MAPK-dependent-manner and inhibits nuclear poly(A) tail synthesis. Interacts with PAN2. Interacts (via C3H1-type zinc finger domains) with PKM. Interacts (via C3H1-type zinc finger domains) with nuclear RNA poly(A) polymerase. Interacts with PPP2CA; this interaction occurs in LPS-stimulated cells and induces ZFP36 dephosphorylation, and hence may promote ARE-containing mRNAs decay. Interacts (via C-terminus) with PRR5L (via C-terminus); this interaction may accelerate ZFP36-mediated mRNA decay during stress. Interacts (via C-terminus) with SFN; this interaction occurs in a phosphorylation-dependent manner. Interacts (via extreme C-terminal region) with SH3KBP1/CIN85 (via SH3 domains); this interaction enhances MAP3K4-induced phosphorylation of ZFP36 at Ser-64 and Ser-91 and does not alter neither ZFP36 binding to ARE-containing transcripts nor TNF-alpha mRNA decay. Interacts with XRN1. Interacts (via C-terminus and Ser-184 phosphorylated form) with YWHAB; this interaction occurs in a p38/MAPKAPK2-dependent manner, increases cytoplasmic localization of ZFP36 and protects ZFP36 from Ser-184 dephosphorylation by serine/threonine phosphatase 2A, and hence may be crucial for stabilizing ARE-containing mRNAs. Interacts (via phosphorylated form) with YWHAE. Interacts (via C-terminus) with YWHAG; this interaction occurs in a phosphorylation-dependent manner. Interacts with YWHAH; this interaction occurs in a phosphorylation-dependent manner. Interacts with YWHAQ; this interaction occurs in a phosphorylation-dependent manner. Interacts with (via C-terminus) YWHAZ; this interaction occurs in a phosphorylation-dependent manner. Does not interact with SH3KBP1. Interacts (via P-P-P-P-G repeats) with GIGYF2; the interaction is direct. Phosphorylated. Phosphorylation at serine and/or threonine residues occurs in a p38 MAPK- and MAPKAPK2-dependent manner. Phosphorylated by MAPKAPK2 at Ser-58 and Ser-184; phosphorylation increases its stability and cytoplasmic localization, promotes binding to 14-3-3 adapter proteins and inhibits the recruitment of cytoplasmic CCR4-NOT and PAN2-PAN3 deadenylase complexes to the mRNA decay machinery, thereby inhibiting ZFP36-induced ARE-containing mRNA deadenylation and decay processes. Phosphorylation by MAPKAPK2 does not impair ARE-containing RNA-binding. Phosphorylated in a MAPKAPK2- and p38 MAPK-dependent manner upon skeletal muscle satellite cell activation; this phosphorylation inhibits ZFP36-mediated mRNA decay activity, and hence stabilizes MYOD1 mRNA. Phosphorylated by MAPK1 upon mitogen stimulation. Phosphorylated at Ser-64 and Ser-91; these phosphorylations increase in a SH3KBP1-dependent manner. Phosphorylated at serine and threonine residues in a pyruvate kinase PKM- and p38 MAPK-dependent manner. Phosphorylation at Ser-58 may participate in the PKM-mediated degradation of ZFP36 in a p38 MAPK-dependent manner. Dephosphorylated by serine/threonine phosphatase 2A at Ser-184. In terms of processing, ubiquitinated; pyruvate kinase (PKM)-dependent ubiquitination leads to proteasomal degradation through a p38 MAPK signaling pathway.

The protein localises to the nucleus. The protein resides in the cytoplasm. It is found in the cytoplasmic granule. It localises to the P-body. Functionally, zinc-finger RNA-binding protein that destabilizes numerous cytoplasmic AU-rich element (ARE)-containing mRNA transcripts by promoting their poly(A) tail removal or deadenylation, and hence provide a mechanism for attenuating protein synthesis. Acts as an 3'-untranslated region (UTR) ARE mRNA-binding adapter protein to communicate signaling events to the mRNA decay machinery. Recruits deadenylase CNOT7 (and probably the CCR4-NOT complex) via association with CNOT1, and hence promotes ARE-mediated mRNA deadenylation. Also functions by recruiting components of the cytoplasmic RNA decay machinery to the bound ARE-containing mRNAs. Self regulates by destabilizing its own mRNA. Binds to 3'-UTR ARE of numerous mRNAs. Also binds to ARE of its own mRNA. Plays a role in anti-inflammatory responses; suppresses tumor necrosis factor (TNF)-alpha production by stimulating ARE-mediated TNF-alpha mRNA decay and several other inflammatory ARE-containing mRNAs in interferon (IFN)- and/or lipopolysaccharide (LPS)-induced macrophages. Also plays a role in the regulation of dendritic cell maturation at the post-transcriptional level, and hence operates as part of a negative feedback loop to limit the inflammatory response. Promotes ARE-mediated mRNA decay of hypoxia-inducible factor HIF1A mRNA during the response of endothelial cells to hypoxia. Positively regulates early adipogenesis of preadipocytes by promoting ARE-mediated mRNA decay of immediate early genes (IEGs). Negatively regulates hematopoietic/erythroid cell differentiation by promoting ARE-mediated mRNA decay of the transcription factor STAT5B mRNA. Plays a role in maintaining skeletal muscle satellite cell quiescence by promoting ARE-mediated mRNA decay of the myogenic determination factor MYOD1 mRNA. Also associates with and regulates the expression of non-ARE-containing target mRNAs at the post-transcriptional level, such as MHC class I mRNAs. Participates in association with argonaute RISC catalytic components in the ARE-mediated mRNA decay mechanism; assists microRNA (miRNA) targeting ARE-containing mRNAs. May also play a role in the regulation of cytoplasmic mRNA decapping; enhances decapping of ARE-containing RNAs, in vitro. Involved in the delivery of target ARE-mRNAs to processing bodies (PBs). In addition to its cytosolic mRNA-decay function, affects nuclear pre-mRNA processing. Negatively regulates nuclear poly(A)-binding protein PABPN1-stimulated polyadenylation activity on ARE-containing pre-mRNA during LPS-stimulated macrophages. Also involved in the regulation of stress granule (SG) and P-body (PB) formation and fusion. Plays a role in the regulation of keratinocyte proliferation, differentiation and apoptosis. Plays a role as a tumor suppressor by inhibiting cell proliferation in breast cancer cells. The chain is mRNA decay activator protein ZFP36 from Bos taurus (Bovine).